Here is a 537-residue protein sequence, read N- to C-terminus: Phosphoenolpyruvate carboxykinase (ATP) (537 aa).

Arginine 61, tyrosine 195, and lysine 201 together coordinate substrate. ATP-binding positions include lysine 201, histidine 220, and 236 to 244; that span reads GLSGTGKTT. Residues lysine 201 and histidine 220 each coordinate Mn(2+). Aspartate 257 contacts Mn(2+). ATP contacts are provided by glutamate 285, arginine 323, and threonine 448. Arginine 323 provides a ligand contact to substrate.

This sequence belongs to the phosphoenolpyruvate carboxykinase (ATP) family. It depends on Mn(2+) as a cofactor.

It localises to the cytoplasm. The enzyme catalyses oxaloacetate + ATP = phosphoenolpyruvate + ADP + CO2. It functions in the pathway carbohydrate biosynthesis; gluconeogenesis. Functionally, involved in the gluconeogenesis. Catalyzes the conversion of oxaloacetate (OAA) to phosphoenolpyruvate (PEP) through direct phosphoryl transfer between the nucleoside triphosphate and OAA. This Rhodopseudomonas palustris (strain TIE-1) protein is Phosphoenolpyruvate carboxykinase (ATP).